The sequence spans 463 residues: MSKKFSSKNSQRYVVVHRPHDDPSFYDTDASAHVLVPVSNPNKTSPEADLRKKDVSSTKPKGRRAHVGEAALYGINFDDSEYDYTQHLKPIGLDPENSIFIASKGNEQKVEKKNIEDLFIEPKYRRDEIEKDDALPVFQRGMAKPEYLLHQQDTTDEIRGFKPDMNPALREVLEALEDEAYVVNDDVVVEDISKKTQLQGDNYGEEEKEDDIFAQLLGSGEAKDEDEFEDEFDEWDIDNVENFEDENYVKEMAQFDNIENLEDLENIDYQADVRRFQKDNSILEKHNSDDEFSNAGLDSVNPSEEEDVLGELPSIQDKSKTGKKKRKSRQKKGAMSDVSGFSMSSSAIARTETMTVLDDQYDQIINGYENYEEELEEDEEQNYQPFDMSAERSDFESMLDDFLDNYELESGGRKLAKKDKEIERLKEAADEVSKGKLSQRRNRERQEKKKLEKVTNTLSSLKF.

At S2 the chain carries N-acetylserine. The segment at 37-63 (PVSNPNKTSPEADLRKKDVSSTKPKGR) is disordered. Over residues 46–56 (PEADLRKKDVS) the composition is skewed to basic and acidic residues. The short motif at 168-179 (ALREVLEALEDE) is the Nuclear export signal element. Disordered stretches follow at residues 284-345 (EKHN…SMSS) and 426-463 (KEAADEVSKGKLSQRRNRERQEKKKLEKVTNTLSSLKF). Phosphoserine occurs at positions 288, 293, 299, and 303. The span at 321–332 (TGKKKRKSRQKK) shows a compositional bias: basic residues. A compositionally biased stretch (low complexity) spans 336 to 345 (SDVSGFSMSS). Positions 355–462 (TVLDDQYDQI…KVTNTLSSLK (108 aa)) form a coiled coil. Positions 444 to 453 (ERQEKKKLEK) are enriched in basic and acidic residues. Over residues 454-463 (VTNTLSSLKF) the composition is skewed to polar residues.

It belongs to the LTV1 family. Associates with the pre-40S ribosomal subunit. Component of the GSE complex composed of GTR1, GTR2, SLM4, MEH1 and LTV1. Interacts directly with GTR1. Interacts with CRM1. Phosphorylated, leading to its dissociation from the 40S pre-40S ribosome.

The protein localises to the nucleus. Its subcellular location is the cytoplasm. Functionally, involved in protein transport. Non-ribosomal factor required for efficient nuclear export of the ribosomal 40S subunit. Component of the GSE complex, a GTPase complex required for intracellular sorting of GAP1 out of the endosome. The protein is Protein LTV1 (LTV1) of Saccharomyces cerevisiae (strain ATCC 204508 / S288c) (Baker's yeast).